We begin with the raw amino-acid sequence, 1200 residues long: Zinc finger protein 804A (1200 aa).

The segment at 57-81 (FYCELCDKQYYKHQEFDNHINSYDH) adopts a C2H2-type zinc-finger fold. Disordered stretches follow at residues 252-280 (STSH…PEAM), 343-367 (DGPV…RTSA), 582-687 (HWFH…NCGG), 727-777 (EDDG…SDES), 799-828 (QPKK…NYPM), and 874-949 (PYNP…TNPE). Basic residues predominate over residues 585–603 (HKSRRKKKRRKLCRYHPGK). Basic and acidic residues predominate over residues 604–666 (SSKEPEGSGK…ASTHLGEKET (63 aa)). 2 stretches are compositionally biased toward polar residues: residues 667-687 (MNTT…NCGG) and 732-756 (LASQ…SLTN). The segment covering 800–811 (PKKKRRRKRSRL) has biased composition (basic residues). Residues 891-944 (TETTPCDSSQTSNDLATPVNVTRDPSNSTTDNTLLEHNQRSQTTNSNEKQTPFK) are compositionally biased toward polar residues.

The protein is Zinc finger protein 804A (Znf804a) of Mus musculus (Mouse).